We begin with the raw amino-acid sequence, 689 residues long: Chloride channel protein ClC-Kb (689 aa).

The Cytoplasmic segment spans residues Met-1–Trp-51. 2 consecutive transmembrane segments (helical) span residues Tyr-52–Gln-83 and Leu-92–Ala-112. The segment at residues Pro-117–Lys-128 is an intramembrane region (helical). Ser-122 contributes to the chloride binding site. The next 2 helical transmembrane spans lie at Ile-142–Thr-161 and Met-162–Leu-181. An N-linked (GlcNAc...) asparagine glycan is attached at Asn-194. Positions Ala-204–Val-225 form an intramembrane region, helical. The helical transmembrane segment at Tyr-237–Val-256 threads the bilayer. Ca(2+) contacts are provided by Glu-260, Glu-262, Asp-279, and Glu-282. A run of 2 helical transmembrane segments spans residues Met-283 to Val-311 and Pro-326 to Glu-343. Positions Ala-350–Ser-361 form an intramembrane region, helical. Transmembrane regions (helical) follow at residues Gly-402–Pro-422 and Met-423–Val-442. Phe-428 serves as a coordination point for chloride. Residues Gly-466–Ala-498 constitute an intramembrane region (helical). A helical transmembrane segment spans residues Pro-502–Tyr-522. Topologically, residues Asp-523–Lys-689 are cytoplasmic. 2 CBS domains span residues Met-553–Arg-613 and Ala-630–Lys-689.

Belongs to the chloride channel (TC 2.A.49) family. Post-translationally, N-glycosylated on a single asparagine, probably Asn-365 or Asn-375. Expressed in two distinct regions of the kidney; the proximal convoluted tubule and the diluting segment.

Its subcellular location is the cell membrane. In terms of biological role, voltage-gated chloride channel. Chloride channels have several functions including the regulation of cell volume, the stabilization of membrane potential, signal transduction and transepithelial transport. This chain is Chloride channel protein ClC-Kb (clcnkb), found in Xenopus laevis (African clawed frog).